Reading from the N-terminus, the 335-residue chain is Glucokinase (335 aa).

11–16 (ADIGGT) is an ATP binding site.

This sequence belongs to the bacterial glucokinase family.

It localises to the cytoplasm. It carries out the reaction D-glucose + ATP = D-glucose 6-phosphate + ADP + H(+). The sequence is that of Glucokinase from Xanthomonas oryzae pv. oryzae (strain MAFF 311018).